A 267-amino-acid polypeptide reads, in one-letter code: Myxobacterial hemagglutinin (267 aa).

4 repeat units span residues 1–66, 67–133, 134–200, and 201–267. The tract at residues 1–267 is 4 X 65 AA tandem repeats; the sequence is MAAYLVQNQW…GPIGFRARLG (267 aa).

This sequence belongs to the bacterial lectin family.

In terms of biological role, this lectin might have a role in the differentiation of cells. This is Myxobacterial hemagglutinin (mbhA) from Myxococcus xanthus.